Reading from the N-terminus, the 389-residue chain is Succinate--CoA ligase [ADP-forming] subunit beta (389 aa).

The ATP-grasp domain occupies 9–236 (KELFAKHEVP…KDATDPLELK (228 aa)). Residues Lys45, 52–54 (GRG), Ser94, and Glu99 contribute to the ATP site. Positions 191 and 205 each coordinate Mg(2+). Residues Asn256 and 318–320 (GIT) contribute to the substrate site.

This sequence belongs to the succinate/malate CoA ligase beta subunit family. In terms of assembly, heterotetramer of two alpha and two beta subunits. The cofactor is Mg(2+).

It carries out the reaction succinate + ATP + CoA = succinyl-CoA + ADP + phosphate. The catalysed reaction is GTP + succinate + CoA = succinyl-CoA + GDP + phosphate. Its pathway is carbohydrate metabolism; tricarboxylic acid cycle; succinate from succinyl-CoA (ligase route): step 1/1. Its function is as follows. Succinyl-CoA synthetase functions in the citric acid cycle (TCA), coupling the hydrolysis of succinyl-CoA to the synthesis of either ATP or GTP and thus represents the only step of substrate-level phosphorylation in the TCA. The beta subunit provides nucleotide specificity of the enzyme and binds the substrate succinate, while the binding sites for coenzyme A and phosphate are found in the alpha subunit. In Rhodococcus jostii (strain RHA1), this protein is Succinate--CoA ligase [ADP-forming] subunit beta.